The following is a 286-amino-acid chain: Pyridoxal kinase PdxY (286 aa).

Substrate-binding positions include Ser9 and 44-45 (TQ). Positions 111, 148, and 181 each coordinate ATP. Residue Asp222 coordinates substrate.

This sequence belongs to the pyridoxine kinase family. PdxY subfamily. As to quaternary structure, homodimer. Requires Mg(2+) as cofactor.

It catalyses the reaction pyridoxal + ATP = pyridoxal 5'-phosphate + ADP + H(+). Its pathway is cofactor metabolism; pyridoxal 5'-phosphate salvage; pyridoxal 5'-phosphate from pyridoxal: step 1/1. Pyridoxal kinase involved in the salvage pathway of pyridoxal 5'-phosphate (PLP). Catalyzes the phosphorylation of pyridoxal to PLP. The chain is Pyridoxal kinase PdxY from Histophilus somni (strain 129Pt) (Haemophilus somnus).